A 98-amino-acid polypeptide reads, in one-letter code: uncharacterized protein (98 aa).

Residues Met1–Ala23 form the signal peptide.

As to expression, nacreous layer of shell (at protein level). Expressed primarily in the mantle with highest level in the mantle pallium and lower level in the mantle edge.

It localises to the secreted. This is an uncharacterized protein from Pinctada maxima (Silver-lipped pearl oyster).